The sequence spans 121 residues: NAD(P)H-quinone oxidoreductase subunit M (121 aa).

Belongs to the complex I NdhM subunit family. NDH-1 can be composed of about 15 different subunits; different subcomplexes with different compositions have been identified which probably have different functions.

It is found in the cellular thylakoid membrane. It carries out the reaction a plastoquinone + NADH + (n+1) H(+)(in) = a plastoquinol + NAD(+) + n H(+)(out). The catalysed reaction is a plastoquinone + NADPH + (n+1) H(+)(in) = a plastoquinol + NADP(+) + n H(+)(out). Functionally, NDH-1 shuttles electrons from an unknown electron donor, via FMN and iron-sulfur (Fe-S) centers, to quinones in the respiratory and/or the photosynthetic chain. The immediate electron acceptor for the enzyme in this species is believed to be plastoquinone. Couples the redox reaction to proton translocation, and thus conserves the redox energy in a proton gradient. Cyanobacterial NDH-1 also plays a role in inorganic carbon-concentration. The chain is NAD(P)H-quinone oxidoreductase subunit M from Nostoc punctiforme (strain ATCC 29133 / PCC 73102).